A 318-amino-acid chain; its full sequence is NADH-ubiquinone oxidoreductase chain 1 (318 aa).

The next 8 membrane-spanning stretches (helical) occupy residues 2-22, 69-89, 102-122, 146-166, 171-191, 222-242, 253-273, and 294-314; these read FLIN…FLTL, FLFT…WAPL, LLFI…SGWA, MTTI…TAFA, HLWL…STLA, LFFM…VILF, EIST…FLWV, and LPLT…LACI.

Belongs to the complex I subunit 1 family.

The protein localises to the mitochondrion inner membrane. The enzyme catalyses a ubiquinone + NADH + 5 H(+)(in) = a ubiquinol + NAD(+) + 4 H(+)(out). In terms of biological role, core subunit of the mitochondrial membrane respiratory chain NADH dehydrogenase (Complex I) that is believed to belong to the minimal assembly required for catalysis. Complex I functions in the transfer of electrons from NADH to the respiratory chain. The immediate electron acceptor for the enzyme is believed to be ubiquinone. This Mammuthus primigenius (Siberian woolly mammoth) protein is NADH-ubiquinone oxidoreductase chain 1 (MT-ND1).